The primary structure comprises 760 residues: Catalase-peroxidase (760 aa).

Residues 1 to 24 (MAESKCPFKSQGSRSNVAGGGTRN) form a disordered region. Residues 96-242 (WHSAGTYRVF…LAAAHMGLIY (147 aa)) constitute a cross-link (tryptophyl-tyrosyl-methioninium (Trp-Tyr) (with M-268)). Histidine 97 (proton acceptor) is an active-site residue. The segment at residues 242-268 (YVNPEGPDGNPDPVAAAHDIRVTFGRM) is a cross-link (tryptophyl-tyrosyl-methioninium (Tyr-Met) (with W-96)). Histidine 283 lines the heme b pocket.

It belongs to the peroxidase family. Peroxidase/catalase subfamily. Homodimer or homotetramer. Heme b is required as a cofactor. Post-translationally, formation of the three residue Trp-Tyr-Met cross-link is important for the catalase, but not the peroxidase activity of the enzyme.

It is found in the cytoplasm. The catalysed reaction is H2O2 + AH2 = A + 2 H2O. It catalyses the reaction 2 H2O2 = O2 + 2 H2O. Bifunctional enzyme with both catalase and broad-spectrum peroxidase activity. The sequence is that of Catalase-peroxidase from Aspergillus clavatus (strain ATCC 1007 / CBS 513.65 / DSM 816 / NCTC 3887 / NRRL 1 / QM 1276 / 107).